Here is a 178-residue protein sequence, read N- to C-terminus: Vegetative protein (178 aa).

2 disordered regions span residues 67-102 and 138-158; these read AGRR…AAAG and NRRP…DIKL. Over residues 76 to 90 the composition is skewed to low complexity; that stretch reads PAARSAVTAAPAAVG.

The protein is Vegetative protein (vegA) of Myxococcus xanthus.